The primary structure comprises 223 residues: ATP synthase subunit a 2 (223 aa).

5 helical membrane passes run Val17–Cys37, Phe77–Leu97, Lys106–Val126, Phe173–Leu193, and Ile195–Ala215.

Belongs to the ATPase A chain family. F-type ATPases have 2 components, CF(1) - the catalytic core - and CF(0) - the membrane proton channel. CF(1) has five subunits: alpha(3), beta(3), gamma(1), delta(1), epsilon(1). CF(0) has four main subunits: a, b, b' and c.

Its subcellular location is the cell inner membrane. Its function is as follows. Key component of the proton channel; it plays a direct role in the translocation of protons across the membrane. The polypeptide is ATP synthase subunit a 2 (Bradyrhizobium sp. (strain BTAi1 / ATCC BAA-1182)).